The sequence spans 395 residues: Imidazolonepropionase (395 aa).

Fe(3+) is bound by residues His63 and His65. Zn(2+) is bound by residues His63 and His65. 3 residues coordinate 4-imidazolone-5-propanoate: Arg72, Tyr135, and His168. Residue Tyr135 participates in N-formimidoyl-L-glutamate binding. His233 is a binding site for Fe(3+). His233 lines the Zn(2+) pocket. Gln236 serves as a coordination point for 4-imidazolone-5-propanoate. Asp308 is a binding site for Fe(3+). A Zn(2+)-binding site is contributed by Asp308. N-formimidoyl-L-glutamate-binding residues include Asn310 and Gly312. 4-imidazolone-5-propanoate is bound at residue Thr313.

This sequence belongs to the metallo-dependent hydrolases superfamily. HutI family. Zn(2+) is required as a cofactor. Requires Fe(3+) as cofactor.

The protein resides in the cytoplasm. It carries out the reaction 4-imidazolone-5-propanoate + H2O = N-formimidoyl-L-glutamate. It participates in amino-acid degradation; L-histidine degradation into L-glutamate; N-formimidoyl-L-glutamate from L-histidine: step 3/3. Catalyzes the hydrolytic cleavage of the carbon-nitrogen bond in imidazolone-5-propanoate to yield N-formimidoyl-L-glutamate. It is the third step in the universal histidine degradation pathway. This is Imidazolonepropionase from Cereibacter sphaeroides (strain ATCC 17023 / DSM 158 / JCM 6121 / CCUG 31486 / LMG 2827 / NBRC 12203 / NCIMB 8253 / ATH 2.4.1.) (Rhodobacter sphaeroides).